Consider the following 92-residue polypeptide: MAAQTDYKKQVVGILLSLAFVLFVFSFSERHEKPLVEGKKQENWHTVVDKASVKIYGSRLVEENKLKQKLGHKQADSILTLLKLANEKHITL.

The signal sequence occupies residues Met-1 to Glu-29.

This is an uncharacterized protein from Bacillus subtilis (strain 168).